An 807-amino-acid polypeptide reads, in one-letter code: MSAHESFWFKSLRWIQKQLVHTIVVPQDPFADLNLDPSRPLVYVMKTESVSDIAALHEITGKLGLPSPYQMLEIDGIKTPRVVCLEGRKPLFGKRDSNEPFLQTFQQLLALHRQQQELDIQLVPVSLYWGRTPGKEDDTMRAAVLEREDPTWLRKCLMILFLGRHNFVQFSRAVSLRHMADEHGTDKRIAHKLARVARVHFRRQRKVMTGPVLPNRQAMFHALLKSDNLKKAIAEEASSKKISEEKARETAIQYLDEIAADYSDSLVRIAERFLTWLWNKLYKGISIKGAEQIRQLHHDGHEIVYVPCHRSHMDYLLLSYILYYEGMVPPHIAAGINLNFWPAGPMFRRGGAFFIRRSFNGNKLYTAVFREYLDQLFAKGYSVEYFTEGGRSRTGRLLAPKTGMLAMTLSSVIRGIERPVTLVPVYLGYDHVMEVATYHKELSGKKKEKESVWQVFGAIRKLGNFGRGYVNFGQPITLQNFLTEKVPNWREEVGEDPEQKPSWLTPVVNALANRVMTRINDAAAASSVTLSSMVLLASEQNALERNQLERQIDLYLSLLKSVPYTSYASVTEGCGKELVDRGIELNKLTETKDDLGTIISIDDSLAISMTYYRNNIIHLFVIPSLIATVMVRHEEVSREELQELVAEFYPLLKAELFMGVTDLPAYVDALVECFKSEGLITGDNRLKLVDDRINQLLLLAGVVGETLKRYAIIFNLLGEQPRMERADLEHHSHRLASRLGAIHGVMAPEFYDKKLYALLSSKLKDLGYLSDKADGDKVRKIRDHANGLLRSSVRQTIIETLNQEQDD.

Positions 308–313 match the HXXXXD motif motif; sequence CHRSHM.

The protein belongs to the GPAT/DAPAT family.

It is found in the cell inner membrane. The enzyme catalyses sn-glycerol 3-phosphate + an acyl-CoA = a 1-acyl-sn-glycero-3-phosphate + CoA. Its pathway is phospholipid metabolism; CDP-diacylglycerol biosynthesis; CDP-diacylglycerol from sn-glycerol 3-phosphate: step 1/3. The chain is Glycerol-3-phosphate acyltransferase from Shewanella amazonensis (strain ATCC BAA-1098 / SB2B).